The primary structure comprises 68 residues: Protein SlyX homolog (68 aa).

Belongs to the SlyX family.

This Pseudomonas fluorescens (strain ATCC BAA-477 / NRRL B-23932 / Pf-5) protein is Protein SlyX homolog.